A 490-amino-acid chain; its full sequence is MRINPTTSDPGVSILENKNLGRIAQIIGPVLDVAFPPGKMPNIYNALVVKGRDTLGEEINVTCEVQQLLGNNRVRAVAMSATEGLKRGMDVVDMGTPLSVPVGGATLGRIFNVLGEPVDNLGPVDTRTTSPIHKSAPAFIQLDTKLSIFETGIKVVDLLAPYRRGGKIGLFGGAGVGKTVLIMELINNIAKAHGGVSVFGGVGERTREGNDLYMEMKESGVINEQNLAESKVALVYGQMNEPPGARMRVGLTALTMAEYFRDVNEQDVLLFIDNIFRFVQAGSEVSALLGRMPSAVGYQPTLSTEMGSLQERITSTKKGSITSIQAVYVPADDLTDPAPATTFAHLDATTVLSRGLAAKGIYPAVDPLDSTSTMLQPRIVGEEHYETAQQVKQTLQRYKELQDIIAILGLDELSEEDRLTVARARKIERFLSQPFFVAEVFTGSPGKYVGLAETIRGFKLILSGELDSLPEQAFYLVGNIDEATAKATNL.

Thr6 carries the post-translational modification Phosphothreonine. Ser13 is modified (phosphoserine). 172–179 (GGAGVGKT) contacts ATP.

It belongs to the ATPase alpha/beta chains family. As to quaternary structure, F-type ATPases have 2 components, CF(1) - the catalytic core - and CF(0) - the membrane proton channel. CF(1) has five subunits: alpha(3), beta(3), gamma(1), delta(1), epsilon(1). CF(0) has four main subunits: a(1), b(1), b'(1) and c(9-12).

The protein resides in the plastid. Its subcellular location is the chloroplast thylakoid membrane. It carries out the reaction ATP + H2O + 4 H(+)(in) = ADP + phosphate + 5 H(+)(out). In terms of biological role, produces ATP from ADP in the presence of a proton gradient across the membrane. The catalytic sites are hosted primarily by the beta subunits. The polypeptide is ATP synthase subunit beta, chloroplastic (Aethionema grandiflorum (Persian stone-cress)).